The chain runs to 195 residues: UPF0215 protein TK2033 (195 aa).

The protein belongs to the UPF0215 family.

The polypeptide is UPF0215 protein TK2033 (Thermococcus kodakarensis (strain ATCC BAA-918 / JCM 12380 / KOD1) (Pyrococcus kodakaraensis (strain KOD1))).